Here is a 469-residue protein sequence, read N- to C-terminus: Diaminobutyrate--2-oxoglutarate transaminase (469 aa).

Lysine 290 is subject to N6-(pyridoxal phosphate)lysine.

This sequence belongs to the class-III pyridoxal-phosphate-dependent aminotransferase family. Pyridoxal 5'-phosphate is required as a cofactor.

It is found in the cytoplasm. The enzyme catalyses L-2,4-diaminobutanoate + 2-oxoglutarate = L-aspartate 4-semialdehyde + L-glutamate. Involved in the degradation of ectoine, which allows H.elongata to utilize ectoine as both a carbon and a nitrogen source for growth. Probably catalyzes the conversion of L-2,4-diaminobutyrate (DABA) to L-aspartate beta-semialdehyde (ASA) by transamination with 2-oxoglutarate. The polypeptide is Diaminobutyrate--2-oxoglutarate transaminase (Halomonas elongata (strain ATCC 33173 / DSM 2581 / NBRC 15536 / NCIMB 2198 / 1H9)).